A 211-amino-acid chain; its full sequence is Protoglabretal synthase MOI1 (211 aa).

A run of 5 helical transmembrane segments spans residues 16–36 (ASLH…TWII), 50–70 (LICW…YYVF), 104–124 (VLGI…LAAY), 135–155 (IFQF…FLTA), and 179–199 (IWVI…HAIC). The 143-residue stretch at 46 to 188 (IERLLICWWA…IWVIVPMLIA (143 aa)) folds into the EXPERA domain.

It belongs to the EBP family. As to expression, expressed in maturing fruits and in juice vesicles.

The protein localises to the membrane. The enzyme catalyses 7,8-epoxymelianol = protoglabretal. It participates in secondary metabolite biosynthesis; terpenoid biosynthesis. Isomerase involved in the biosynthesis of glabretanes triterpene natural products such as glabretal, a component with in vitro antiproliferative properties on lymphocytes. Catalyzes the conversion of 7,8-epoxymelianol to protoglabretal via skeletal rearrangements. This chain is Protoglabretal synthase MOI1, found in Citrus sinensis (Sweet orange).